Consider the following 260-residue polypeptide: F-actin-capping protein subunit beta (260 aa).

It belongs to the F-actin-capping protein beta subunit family. As to quaternary structure, component of the F-actin capping complex, composed of a heterodimer of an alpha and a beta subunit.

The protein resides in the cytoplasm. Its subcellular location is the cytoskeleton. The protein localises to the actin patch. F-actin-capping proteins bind in a Ca(2+)-independent manner to the fast growing ends of actin filaments (barbed end) thereby blocking the exchange of subunits at these ends. Unlike other capping proteins (such as gelsolin and severin), these proteins do not sever actin filaments. This Yarrowia lipolytica (strain CLIB 122 / E 150) (Yeast) protein is F-actin-capping protein subunit beta (CAP2).